The primary structure comprises 389 residues: Xylose isomerase (389 aa).

Catalysis depends on residues His101 and Asp104. Residues Glu232, Glu268, His271, Asp296, Asp307, and Asp309 each contribute to the Mg(2+) site.

Belongs to the xylose isomerase family. As to quaternary structure, homotetramer. Requires Mg(2+) as cofactor.

It is found in the cytoplasm. The catalysed reaction is alpha-D-xylose = alpha-D-xylulofuranose. The protein is Xylose isomerase of Lactococcus lactis subsp. cremoris (strain SK11).